Consider the following 292-residue polypeptide: NAD kinase (292 aa).

Asp73 (proton acceptor) is an active-site residue. Residues 73 to 74 (DG), 147 to 148 (NE), His158, Arg175, Asp177, 188 to 193 (TAYSLS), and Gln247 each bind NAD(+).

The protein belongs to the NAD kinase family. It depends on a divalent metal cation as a cofactor.

The protein localises to the cytoplasm. It catalyses the reaction NAD(+) + ATP = ADP + NADP(+) + H(+). Functionally, involved in the regulation of the intracellular balance of NAD and NADP, and is a key enzyme in the biosynthesis of NADP. Catalyzes specifically the phosphorylation on 2'-hydroxyl of the adenosine moiety of NAD to yield NADP. The chain is NAD kinase from Shigella dysenteriae serotype 1 (strain Sd197).